The sequence spans 173 residues: Cell division protein SepF (173 aa).

Positions Ser-17–His-85 are disordered. Over residues Ser-35–Ala-52 the composition is skewed to low complexity.

The protein belongs to the SepF family. Homodimer. Interacts with FtsZ.

It localises to the cytoplasm. In terms of biological role, cell division protein that is part of the divisome complex and is recruited early to the Z-ring. Probably stimulates Z-ring formation, perhaps through the cross-linking of FtsZ protofilaments. Its function overlaps with FtsA. The chain is Cell division protein SepF from Kocuria rhizophila (strain ATCC 9341 / DSM 348 / NBRC 103217 / DC2201).